A 339-amino-acid chain; its full sequence is 5-dehydro-2-deoxygluconokinase (339 aa).

It belongs to the carbohydrate kinase PfkB family.

The catalysed reaction is 5-dehydro-2-deoxy-D-gluconate + ATP = 6-phospho-5-dehydro-2-deoxy-D-gluconate + ADP + H(+). It functions in the pathway polyol metabolism; myo-inositol degradation into acetyl-CoA; acetyl-CoA from myo-inositol: step 5/7. Functionally, catalyzes the phosphorylation of 5-dehydro-2-deoxy-D-gluconate (2-deoxy-5-keto-D-gluconate or DKG) to 6-phospho-5-dehydro-2-deoxy-D-gluconate (DKGP). The polypeptide is 5-dehydro-2-deoxygluconokinase (Clostridium botulinum (strain Eklund 17B / Type B)).